Consider the following 318-residue polypeptide: ADP-L-glycero-D-manno-heptose-6-epimerase (318 aa).

NADP(+) is bound by residues 10 to 11 (FI), 31 to 32 (DD), Lys38, Lys53, 80 to 84 (EGACS), and Asn97. Residue Tyr144 is the Proton acceptor of the active site. An NADP(+)-binding site is contributed by Lys148. Asn173 provides a ligand contact to substrate. The NADP(+) site is built by Val174 and Lys182. Lys182 acts as the Proton acceptor in catalysis. Residues Lys184, His191, 205 to 208 (FGAW), Arg218, and Tyr282 each bind substrate.

The protein belongs to the NAD(P)-dependent epimerase/dehydratase family. HldD subfamily. In terms of assembly, homopentamer. NADP(+) serves as cofactor.

It carries out the reaction ADP-D-glycero-beta-D-manno-heptose = ADP-L-glycero-beta-D-manno-heptose. It functions in the pathway nucleotide-sugar biosynthesis; ADP-L-glycero-beta-D-manno-heptose biosynthesis; ADP-L-glycero-beta-D-manno-heptose from D-glycero-beta-D-manno-heptose 7-phosphate: step 4/4. Catalyzes the interconversion between ADP-D-glycero-beta-D-manno-heptose and ADP-L-glycero-beta-D-manno-heptose via an epimerization at carbon 6 of the heptose. This chain is ADP-L-glycero-D-manno-heptose-6-epimerase, found in Chromohalobacter salexigens (strain ATCC BAA-138 / DSM 3043 / CIP 106854 / NCIMB 13768 / 1H11).